The following is a 102-amino-acid chain: Small ribosomal subunit protein uS10 (102 aa).

Belongs to the universal ribosomal protein uS10 family. Part of the 30S ribosomal subunit.

Involved in the binding of tRNA to the ribosomes. The chain is Small ribosomal subunit protein uS10 from Limosilactobacillus reuteri (strain DSM 20016) (Lactobacillus reuteri).